Consider the following 244-residue polypeptide: Agamous-like MADS-box protein MADS3 (244 aa).

An MADS-box domain is found at 1 to 61 (MGRGRVELKR…GKLYEFGSAG (61 aa)). One can recognise a K-box domain in the interval 85-175 (TQSWYQEVSK…KLKLEAEGQS (91 aa)). The segment at 180–206 (QGSWNPSTATAGNSSFPVHPSQSNPMD) is disordered. Residues 181–204 (GSWNPSTATAGNSSFPVHPSQSNP) show a composition bias toward polar residues.

Expressed in flowers and seeds.

The protein resides in the nucleus. In terms of biological role, probable transcription factor involved in flower development. This chain is Agamous-like MADS-box protein MADS3, found in Vitis vinifera (Grape).